Reading from the N-terminus, the 60-residue chain is Small ribosomal subunit protein eS31 (60 aa).

4 residues coordinate Zn(2+): Cys27, Cys30, Cys45, and Cys48. A C4-type zinc finger spans residues 27 to 48; the sequence is CPRCGPGVFMAEHLNRYACGKC.

The protein belongs to the eukaryotic ribosomal protein eS31 family. In terms of assembly, part of the 30S ribosomal subunit. Requires Zn(2+) as cofactor.

The sequence is that of Small ribosomal subunit protein eS31 from Methanocaldococcus jannaschii (strain ATCC 43067 / DSM 2661 / JAL-1 / JCM 10045 / NBRC 100440) (Methanococcus jannaschii).